A 179-amino-acid chain; its full sequence is Protein PLASTID REDOX INSENSITIVE 2, chloroplastic (179 aa).

The transit peptide at 1–69 (MASMHEALFS…SLSRRGFVCR (69 aa)) directs the protein to the chloroplast.

Binds DNA when in complex with CSP41b.

Its subcellular location is the plastid. The protein localises to the chloroplast stroma. The protein resides in the chloroplast nucleoid. Functionally, involved in redox-mediated retrograde signaling to synchronize the expression of photosynthetic genes from both the nuclear and plastidic genomes, especially in excess light conditions. Required for full expression of genes transcribed by the plastid-encoded RNA polymerase (PEP). Essential for embryo development. The sequence is that of Protein PLASTID REDOX INSENSITIVE 2, chloroplastic from Arabidopsis thaliana (Mouse-ear cress).